A 159-amino-acid polypeptide reads, in one-letter code: Ribosomal RNA large subunit methyltransferase H (159 aa).

Residues Leu-76, Gly-108, and 127-132 (FSKMTF) each bind S-adenosyl-L-methionine.

This sequence belongs to the RNA methyltransferase RlmH family. Homodimer.

Its subcellular location is the cytoplasm. It catalyses the reaction pseudouridine(1915) in 23S rRNA + S-adenosyl-L-methionine = N(3)-methylpseudouridine(1915) in 23S rRNA + S-adenosyl-L-homocysteine + H(+). Specifically methylates the pseudouridine at position 1915 (m3Psi1915) in 23S rRNA. In Geobacillus kaustophilus (strain HTA426), this protein is Ribosomal RNA large subunit methyltransferase H.